Reading from the N-terminus, the 456-residue chain is 3-isopropylmalate dehydratase large subunit (456 aa).

3 residues coordinate [4Fe-4S] cluster: cysteine 336, cysteine 396, and cysteine 399.

Belongs to the aconitase/IPM isomerase family. LeuC type 1 subfamily. In terms of assembly, heterodimer of LeuC and LeuD. [4Fe-4S] cluster is required as a cofactor.

The catalysed reaction is (2R,3S)-3-isopropylmalate = (2S)-2-isopropylmalate. The protein operates within amino-acid biosynthesis; L-leucine biosynthesis; L-leucine from 3-methyl-2-oxobutanoate: step 2/4. Functionally, catalyzes the isomerization between 2-isopropylmalate and 3-isopropylmalate, via the formation of 2-isopropylmaleate. This chain is 3-isopropylmalate dehydratase large subunit, found in Staphylococcus saprophyticus subsp. saprophyticus (strain ATCC 15305 / DSM 20229 / NCIMB 8711 / NCTC 7292 / S-41).